Here is a 512-residue protein sequence, read N- to C-terminus: UDP-N-acetylmuramate--L-alanine ligase (512 aa).

Residue 132–138 (GAHGKTT) participates in ATP binding.

Belongs to the MurCDEF family.

The protein localises to the cytoplasm. It catalyses the reaction UDP-N-acetyl-alpha-D-muramate + L-alanine + ATP = UDP-N-acetyl-alpha-D-muramoyl-L-alanine + ADP + phosphate + H(+). It functions in the pathway cell wall biogenesis; peptidoglycan biosynthesis. Its function is as follows. Cell wall formation. This is UDP-N-acetylmuramate--L-alanine ligase from Bifidobacterium longum (strain NCC 2705).